The primary structure comprises 535 residues: uncharacterized protein (535 aa).

The next 2 helical transmembrane spans lie at 7 to 27 and 509 to 529; these read DFDV…AYLA and GGAV…ACLA.

It localises to the cell membrane. This is an uncharacterized protein from Mycobacterium bovis (strain ATCC BAA-935 / AF2122/97).